The primary structure comprises 219 residues: Octanoyltransferase (219 aa).

Residues 32–207 form the BPL/LPL catalytic domain; sequence ASSPDQLWIV…TFSHNLGYQN (176 aa). Substrate contacts are provided by residues 71 to 78, 138 to 140, and 151 to 153; these read RGGQVTYH, SLG, and GLA. Cys-169 functions as the Acyl-thioester intermediate in the catalytic mechanism.

The protein belongs to the LipB family.

The protein localises to the cytoplasm. It catalyses the reaction octanoyl-[ACP] + L-lysyl-[protein] = N(6)-octanoyl-L-lysyl-[protein] + holo-[ACP] + H(+). It participates in protein modification; protein lipoylation via endogenous pathway; protein N(6)-(lipoyl)lysine from octanoyl-[acyl-carrier-protein]: step 1/2. Catalyzes the transfer of endogenously produced octanoic acid from octanoyl-acyl-carrier-protein onto the lipoyl domains of lipoate-dependent enzymes. Lipoyl-ACP can also act as a substrate although octanoyl-ACP is likely to be the physiological substrate. The sequence is that of Octanoyltransferase from Shewanella sediminis (strain HAW-EB3).